We begin with the raw amino-acid sequence, 241 residues long: Pyridoxine 5'-phosphate synthase (241 aa).

Asn7 is a binding site for 3-amino-2-oxopropyl phosphate. Asp9 to His10 provides a ligand contact to 1-deoxy-D-xylulose 5-phosphate. Arg18 is a binding site for 3-amino-2-oxopropyl phosphate. Catalysis depends on His43, which acts as the Proton acceptor. 1-deoxy-D-xylulose 5-phosphate-binding residues include Arg45 and His50. Catalysis depends on Glu70, which acts as the Proton acceptor. Position 100 (Thr100) interacts with 1-deoxy-D-xylulose 5-phosphate. Catalysis depends on His191, which acts as the Proton donor. 3-amino-2-oxopropyl phosphate contacts are provided by residues Gly192 and Gly213–His214.

This sequence belongs to the PNP synthase family. As to quaternary structure, homooctamer; tetramer of dimers.

It is found in the cytoplasm. The catalysed reaction is 3-amino-2-oxopropyl phosphate + 1-deoxy-D-xylulose 5-phosphate = pyridoxine 5'-phosphate + phosphate + 2 H2O + H(+). The protein operates within cofactor biosynthesis; pyridoxine 5'-phosphate biosynthesis; pyridoxine 5'-phosphate from D-erythrose 4-phosphate: step 5/5. Functionally, catalyzes the complicated ring closure reaction between the two acyclic compounds 1-deoxy-D-xylulose-5-phosphate (DXP) and 3-amino-2-oxopropyl phosphate (1-amino-acetone-3-phosphate or AAP) to form pyridoxine 5'-phosphate (PNP) and inorganic phosphate. The protein is Pyridoxine 5'-phosphate synthase of Maridesulfovibrio salexigens (strain ATCC 14822 / DSM 2638 / NCIMB 8403 / VKM B-1763) (Desulfovibrio salexigens).